The sequence spans 334 residues: Probable fructose-bisphosphate aldolase class 1 (334 aa).

Belongs to the class I fructose-bisphosphate aldolase family.

It carries out the reaction beta-D-fructose 1,6-bisphosphate = D-glyceraldehyde 3-phosphate + dihydroxyacetone phosphate. Its pathway is carbohydrate degradation; glycolysis; D-glyceraldehyde 3-phosphate and glycerone phosphate from D-glucose: step 4/4. The chain is Probable fructose-bisphosphate aldolase class 1 from Xylella fastidiosa (strain Temecula1 / ATCC 700964).